Reading from the N-terminus, the 132-residue chain is Small ribosomal subunit protein uS8 (132 aa).

Belongs to the universal ribosomal protein uS8 family. In terms of assembly, part of the 30S ribosomal subunit. Contacts proteins S5 and S12.

In terms of biological role, one of the primary rRNA binding proteins, it binds directly to 16S rRNA central domain where it helps coordinate assembly of the platform of the 30S subunit. The sequence is that of Small ribosomal subunit protein uS8 from Streptococcus suis (strain 98HAH33).